The following is a 105-amino-acid chain: Large ribosomal subunit protein bL21 (105 aa).

The protein belongs to the bacterial ribosomal protein bL21 family. Part of the 50S ribosomal subunit. Contacts protein L20.

Its function is as follows. This protein binds to 23S rRNA in the presence of protein L20. The chain is Large ribosomal subunit protein bL21 from Porphyromonas gingivalis (strain ATCC BAA-308 / W83).